The sequence spans 141 residues: Galactose-6-phosphate isomerase subunit LacA 1 (141 aa).

It belongs to the LacAB/RpiB family. As to quaternary structure, heteromultimeric protein consisting of LacA and LacB.

The catalysed reaction is aldehydo-D-galactose 6-phosphate = keto-D-tagatose 6-phosphate. The protein operates within carbohydrate metabolism; D-galactose 6-phosphate degradation; D-tagatose 6-phosphate from D-galactose 6-phosphate: step 1/1. The sequence is that of Galactose-6-phosphate isomerase subunit LacA 1 from Streptococcus pyogenes serotype M1.